Reading from the N-terminus, the 510-residue chain is NAD(P)H-quinone oxidoreductase subunit 2, chloroplastic (510 aa).

Helical transmembrane passes span 28-48 (DGSF…LLII), 57-77 (IPWL…TLLF), 99-119 (IFQF…VEYI), 124-144 (MALT…MFLC), 149-169 (LITI…LSGY), 183-203 (YLLM…WLYG), 227-247 (PGIS…LSPA), 295-315 (WHLL…LIAI), 323-343 (MLAY…IVGD), 354-374 (YMLF…LFGL), 395-415 (ALSL…AGFF), 418-438 (LYLF…IGLL), and 484-504 (MIVC…IIAI).

This sequence belongs to the complex I subunit 2 family. NDH is composed of at least 16 different subunits, 5 of which are encoded in the nucleus.

The protein resides in the plastid. The protein localises to the chloroplast thylakoid membrane. The enzyme catalyses a plastoquinone + NADH + (n+1) H(+)(in) = a plastoquinol + NAD(+) + n H(+)(out). The catalysed reaction is a plastoquinone + NADPH + (n+1) H(+)(in) = a plastoquinol + NADP(+) + n H(+)(out). Functionally, NDH shuttles electrons from NAD(P)H:plastoquinone, via FMN and iron-sulfur (Fe-S) centers, to quinones in the photosynthetic chain and possibly in a chloroplast respiratory chain. The immediate electron acceptor for the enzyme in this species is believed to be plastoquinone. Couples the redox reaction to proton translocation, and thus conserves the redox energy in a proton gradient. In Silene latifolia (White campion), this protein is NAD(P)H-quinone oxidoreductase subunit 2, chloroplastic.